The following is a 430-amino-acid chain: Asparagine--tRNA ligase (430 aa).

Belongs to the class-II aminoacyl-tRNA synthetase family. As to quaternary structure, homodimer.

It is found in the cytoplasm. It catalyses the reaction tRNA(Asn) + L-asparagine + ATP = L-asparaginyl-tRNA(Asn) + AMP + diphosphate + H(+). In Bacillus licheniformis (strain ATCC 14580 / DSM 13 / JCM 2505 / CCUG 7422 / NBRC 12200 / NCIMB 9375 / NCTC 10341 / NRRL NRS-1264 / Gibson 46), this protein is Asparagine--tRNA ligase.